Consider the following 247-residue polypeptide: tRNA pseudouridine synthase A (247 aa).

The Nucleophile role is filled by aspartate 53. Tyrosine 111 serves as a coordination point for substrate.

The protein belongs to the tRNA pseudouridine synthase TruA family. As to quaternary structure, homodimer.

The catalysed reaction is uridine(38/39/40) in tRNA = pseudouridine(38/39/40) in tRNA. In terms of biological role, formation of pseudouridine at positions 38, 39 and 40 in the anticodon stem and loop of transfer RNAs. This Bacillus subtilis (strain 168) protein is tRNA pseudouridine synthase A.